A 397-amino-acid chain; its full sequence is MGSYLGIYTILVLCLLGYSANAEVFTAGGPPNSDITAAVLKAFTSACQAPAPSQVLIPKGDFKLGETVMTGPCKSPIEFTLQGNVKTDGGSTQGKDRWVVFEKINGFKLNGGGTFDGEGNAAWKANNCHKTFECKKLPISVRFDFVDNAEIKDVTSLDAKNFHFNVISGKNMTFDNIKIIAPAESPNTDGIHLGRCEGVKILNTKIATGDDCISVGDGMKNLLIEKVVCGPGHGISVGSLGRYGWEQDVTDITVKNCTLEGTSNGLRIKTWPSAACTTTAAGIHFEDIILNKVSNPILIDQEYCPWNQCNKNKPSTIKLVDITFRNIRGTSENKDAVKLLCSKGHPCENVEIGDINIEYTGPDGPPTFECTNVTPKLVGAQNPKACVGPVVKAPGKE.

The N-terminal stretch at 1 to 22 (MGSYLGIYTILVLCLLGYSANA) is a signal peptide. PbH1 repeat units lie at residues 169 to 195 (GKNM…HLGR), 196 to 217 (CEGV…SVGD), 219 to 239 (MKNL…SVGS), and 249 to 270 (VTDI…RIKT). N171 carries N-linked (GlcNAc...) asparagine glycosylation. The active-site Proton donor is the D210. C212 and C229 are oxidised to a cystine. H233 is an active-site residue. Residue N256 is glycosylated (N-linked (GlcNAc...) asparagine). 2 disulfide bridges follow: C341–C347 and C370–C386.

The protein belongs to the glycosyl hydrolase 28 family. Pollen.

It is found in the secreted. The protein resides in the cell wall. It carries out the reaction (1,4-alpha-D-galacturonosyl)n+m + H2O = (1,4-alpha-D-galacturonosyl)n + (1,4-alpha-D-galacturonosyl)m.. Functionally, may function in depolymerizing pectin during pollen development, germination, and tube growth. This is Polygalacturonase from Brassica napus (Rape).